Reading from the N-terminus, the 483-residue chain is Probable cysteine protease ATG4 (483 aa).

Catalysis depends on Cys-141, which acts as the Nucleophile. Catalysis depends on residues Asp-315 and His-317.

The protein belongs to the peptidase C54 family.

It is found in the cytoplasm. The protein resides in the nucleus. Its subcellular location is the preautophagosomal structure. It catalyses the reaction [protein]-C-terminal L-amino acid-glycyl-phosphatidylethanolamide + H2O = [protein]-C-terminal L-amino acid-glycine + a 1,2-diacyl-sn-glycero-3-phosphoethanolamine. Functionally, cysteine protease that plays a key role in cytoplasm to vacuole transport (Cvt) and autophagy by mediating both proteolytic activation and delipidation of ATG8. Required for selective autophagic degradation of the nucleus (nucleophagy) as well as for mitophagy which contributes to regulate mitochondrial quantity and quality by eliminating the mitochondria to a basal level to fulfill cellular energy requirements and preventing excess ROS production. The protease activity is required for proteolytic activation of ATG8: cleaves the C-terminal amino acid of ATG8 to reveal a C-terminal glycine. ATG8 ubiquitin-like activity requires the exposure of the glycine at the C-terminus for its conjugation to phosphatidylethanolamine (PE) and its insertion to membranes, which is necessary for autophagy. The ATG8-PE conjugate mediates tethering between adjacent membranes and stimulates membrane hemifusion, leading to expansion of the autophagosomal membrane during autophagy. In addition to the protease activity, also catalyzes deconjugation of PE-conjugated forms of ATG8 during macroautophagy: ATG8 delipidation is required to release the protein from membranes, which facilitates multiple events during macroautophagy, and especially for efficient autophagosome biogenesis, the assembly of ATG9-containing tubulovesicular clusters into phagophores/autophagosomes, and for the disassembly of PAS-associated ATG components. ATG8 delipidation by ATG4 also recycles ATG8-PE generated on inappropriate membranes to maintain a reservoir of unlipidated ATG8 that is required for autophagosome formation at the PAS. The sequence is that of Probable cysteine protease ATG4 (ATG4) from Candida glabrata (strain ATCC 2001 / BCRC 20586 / JCM 3761 / NBRC 0622 / NRRL Y-65 / CBS 138) (Yeast).